Here is a 1093-residue protein sequence, read N- to C-terminus: GPI ethanolamine phosphate transferase 3, catalytic subunit (1093 aa).

A helical membrane pass occupies residues 4–24 (VSVLLFLAWVCFLFYAGIALF). N-linked (GlcNAc...) asparagine glycosylation is present at Asn268. 9 helical membrane passes run 460-480 (AAAC…GFLF), 483-503 (LLLI…GVSV), 512-532 (VVLG…KAWV), 669-689 (LWYG…RLWL), 702-722 (VLFV…YWAL), 748-768 (VMGL…TVLV), 831-851 (SVYS…LMLL), 856-876 (VSLV…LLAA), and 945-965 (FASH…PFLC). The tract at residues 971-991 (KRRQPLPGSESEARVRPEEEE) is disordered. 2 helical membrane passes run 1018–1038 (LKYL…ASIL) and 1052–1072 (FIFE…GIAL).

This sequence belongs to the PIGG/PIGN/PIGO family. PIGO subfamily. In terms of assembly, forms the ethanolamine phosphate transferase 3 complex composed by PIGO and PIGF. PIGF is required to stabilize PIGO.

It localises to the endoplasmic reticulum membrane. The protein operates within glycolipid biosynthesis; glycosylphosphatidylinositol-anchor biosynthesis. In terms of biological role, catalytic subunit of the ethanolamine phosphate transferase 3 complex that transfers an ethanolamine phosphate (EtNP) from a phosphatidylethanolamine (PE) to the 6-OH position of the third alpha-1,2-linked mannose of the an alpha-D-Man-(1-&gt;2)-alpha-D-Man-(1-&gt;6)-2-PEtn-alpha-D-Man-(1-&gt;4)-alpha-D-GlcN-(1-&gt;6)-(1-radyl,2-acyl-sn-glycero-3-phospho)-2-acyl-inositol (also termed H6) intermediate to generate a 6-PEtn-alpha-D-Man-(1-&gt;2)-alpha-D-Man-(1-&gt;6)-2-PEtn-alpha-D-Man-(1-&gt;4)-alpha-D-GlcN-(1-&gt;6)-(1-radyl,2-acyl-sn-glycero-3-phospho)-2-acyl-inositol (also termed H7) and participates in the tenth step of the glycosylphosphatidylinositol-anchor biosynthesis. The polypeptide is GPI ethanolamine phosphate transferase 3, catalytic subunit (Mus musculus (Mouse)).